Here is a 360-residue protein sequence, read N- to C-terminus: UDP-N-acetylglucosamine--N-acetylmuramyl-(pentapeptide) pyrophosphoryl-undecaprenol N-acetylglucosamine transferase (360 aa).

Residues serine 198 and glutamine 289 each contribute to the UDP-N-acetyl-alpha-D-glucosamine site.

The protein belongs to the glycosyltransferase 28 family. MurG subfamily.

It is found in the cell membrane. The catalysed reaction is Mur2Ac(oyl-L-Ala-gamma-D-Glu-L-Lys-D-Ala-D-Ala)-di-trans,octa-cis-undecaprenyl diphosphate + UDP-N-acetyl-alpha-D-glucosamine = beta-D-GlcNAc-(1-&gt;4)-Mur2Ac(oyl-L-Ala-gamma-D-Glu-L-Lys-D-Ala-D-Ala)-di-trans,octa-cis-undecaprenyl diphosphate + UDP + H(+). It functions in the pathway cell wall biogenesis; peptidoglycan biosynthesis. Cell wall formation. Catalyzes the transfer of a GlcNAc subunit on undecaprenyl-pyrophosphoryl-MurNAc-pentapeptide (lipid intermediate I) to form undecaprenyl-pyrophosphoryl-MurNAc-(pentapeptide)GlcNAc (lipid intermediate II). This is UDP-N-acetylglucosamine--N-acetylmuramyl-(pentapeptide) pyrophosphoryl-undecaprenol N-acetylglucosamine transferase from Streptococcus pyogenes serotype M5 (strain Manfredo).